The primary structure comprises 669 residues: Threonine--tRNA ligase (669 aa).

A TGS domain is found at 3–60 (DAQQITLLVDGEETKVTTGTTGAELFFERRDVVVARVNGELKDLDQELPEGAEVEGVT). A catalytic region spans residues 260 to 566 (DHRKLGSELD…LTEHYAGAFP (307 aa)). Zn(2+) contacts are provided by Cys-365, His-416, and His-543.

Belongs to the class-II aminoacyl-tRNA synthetase family. As to quaternary structure, homodimer. Requires Zn(2+) as cofactor.

Its subcellular location is the cytoplasm. It carries out the reaction tRNA(Thr) + L-threonine + ATP = L-threonyl-tRNA(Thr) + AMP + diphosphate + H(+). In terms of biological role, catalyzes the attachment of threonine to tRNA(Thr) in a two-step reaction: L-threonine is first activated by ATP to form Thr-AMP and then transferred to the acceptor end of tRNA(Thr). Also edits incorrectly charged L-seryl-tRNA(Thr). The protein is Threonine--tRNA ligase of Pseudarthrobacter chlorophenolicus (strain ATCC 700700 / DSM 12829 / CIP 107037 / JCM 12360 / KCTC 9906 / NCIMB 13794 / A6) (Arthrobacter chlorophenolicus).